We begin with the raw amino-acid sequence, 276 residues long: Secretagogin (276 aa).

6 consecutive EF-hand domains span residues 12–47, 58–93, 105–140, 149–184, 197–232, and 240–276; these read LDAA…MLMK, NLHK…EDEN, DSSV…LFLH, KLEE…QENF, ERKR…MMEL, and VDLD…KINP. Ca(2+)-binding residues include Asp25, Asp27, Tyr31, Glu36, Asp71, Ser73, Asp75, Arg77, Glu82, Asp118, Asp120, Ser122, Glu129, Asp162, Asn164, Asp166, Arg168, Asp173, Asp210, Ser212, Thr214, Glu221, Asp254, Asn256, Asp258, Lys260, and Glu265.

Expressed at high levels in the pancreatic islets of Langerhans and to a much lesser extent in the gastrointestinal tract (stomach, small intestine and colon), the adrenal medulla and cortex and the thyroid C-cells. In the brain, the expression is restricted to distinct subtypes of neurons with highest expression in the molecular layer of the cerebellum (stellate and basket cells), in the anterior part of the pituitary gland, in the thalamus, in the hypothalamus and in a subgroup of neocortical neurons.

It localises to the cytoplasm. Its subcellular location is the secreted. The protein localises to the cytoplasmic vesicle. The protein resides in the secretory vesicle membrane. The chain is Secretagogin (SCGN) from Homo sapiens (Human).